We begin with the raw amino-acid sequence, 472 residues long: 3-isopropylmalate dehydratase large subunit (472 aa).

[4Fe-4S] cluster is bound by residues C347, C407, and C410.

Belongs to the aconitase/IPM isomerase family. LeuC type 1 subfamily. As to quaternary structure, heterodimer of LeuC and LeuD. It depends on [4Fe-4S] cluster as a cofactor.

The enzyme catalyses (2R,3S)-3-isopropylmalate = (2S)-2-isopropylmalate. Its pathway is amino-acid biosynthesis; L-leucine biosynthesis; L-leucine from 3-methyl-2-oxobutanoate: step 2/4. In terms of biological role, catalyzes the isomerization between 2-isopropylmalate and 3-isopropylmalate, via the formation of 2-isopropylmaleate. The polypeptide is 3-isopropylmalate dehydratase large subunit (Parasynechococcus marenigrum (strain WH8102)).